The following is a 251-amino-acid chain: uncharacterized protein (251 aa).

The first 19 residues, 1–19 (MRYLKRITIYISLLILVSG), serve as a signal peptide directing secretion. Residue C20 is the site of N-palmitoyl cysteine attachment. C20 carries the S-diacylglycerol cysteine lipid modification.

It belongs to the staphylococcal tandem lipoprotein family.

The protein resides in the cell membrane. This is an uncharacterized protein from Staphylococcus epidermidis (strain ATCC 12228 / FDA PCI 1200).